Reading from the N-terminus, the 388-residue chain is Tryptophan synthase beta chain 1 (388 aa).

The residue at position 82 (Lys82) is an N6-(pyridoxal phosphate)lysine.

The protein belongs to the TrpB family. In terms of assembly, tetramer of two alpha and two beta chains. Pyridoxal 5'-phosphate is required as a cofactor.

The catalysed reaction is (1S,2R)-1-C-(indol-3-yl)glycerol 3-phosphate + L-serine = D-glyceraldehyde 3-phosphate + L-tryptophan + H2O. Its pathway is amino-acid biosynthesis; L-tryptophan biosynthesis; L-tryptophan from chorismate: step 5/5. The beta subunit is responsible for the synthesis of L-tryptophan from indole and L-serine. The chain is Tryptophan synthase beta chain 1 (trpB1) from Pyrococcus abyssi (strain GE5 / Orsay).